The primary structure comprises 309 residues: Clotting factor G beta subunit (309 aa).

An N-terminal signal peptide occupies residues 1–31 (MDISFLVFITLSMALFSSNVTGTSVTSRVRR). Cystine bridges form between cysteine 38–cysteine 158, cysteine 74–cysteine 90, cysteine 205–cysteine 227, and cysteine 238–cysteine 268. The region spanning 47 to 292 (IIGGGIATPH…YVNWLQEITF (246 aa)) is the Peptidase S1 domain. Residue histidine 89 is the Charge relay system of the active site. Residue asparagine 100 is glycosylated (N-linked (GlcNAc...) asparagine). The active-site Charge relay system is aspartate 138. An N-linked (GlcNAc...) asparagine glycan is attached at asparagine 206. The Charge relay system role is filled by serine 242.

The protein belongs to the peptidase S1 family. In terms of assembly, clotting factor G is a heterodimer composed of two non-covalently associated subunits, alpha and beta. Upon activation, converted to a two-chain active form linked by a disulfide bond. Forms a covalent heterodimer with intracellular coagulation inhibitor 3/LICI-3. As to expression, expressed in the hemocytes (at protein level).

It catalyses the reaction Selective cleavage of 98-Arg-|-Ile-99 bond in Limulus proclotting enzyme to form active clotting enzyme.. With respect to regulation, binding to (1-&gt;3)-beta-D-glucan to alpha subunit, induces autocatalysis and activation of beta subunit. Inhibited by intracellular coagulation inhibitor 3/LICI-3 and to a lesser extend by intracellular coagulation inhibitor 2/LICI-2. Functionally, component of the heterodimer clotting factor G which may play a role in defense mechanisms against fungi. Initiates a (1-&gt;3)-beta-glucan-sensing clotting pathway whereby the alpha subunit binds to glucans containing (1-&gt;3)-beta linkages, which are components of the fungal cell wall, and the beta subunit catalyzes the activation of proclotting enzyme. This chain is Clotting factor G beta subunit, found in Tachypleus tridentatus (Japanese horseshoe crab).